Here is a 228-residue protein sequence, read N- to C-terminus: Protein Thf1 (228 aa).

A coiled-coil region spans residues 201–223 (IKRSKEVVDELSQTERRKREERA). Positions 209-228 (DELSQTERRKREERAVSQPG) are disordered.

Belongs to the THF1 family.

In terms of biological role, may be involved in photosynthetic membrane biogenesis. This Gloeobacter violaceus (strain ATCC 29082 / PCC 7421) protein is Protein Thf1.